Reading from the N-terminus, the 347-residue chain is 4-hydroxyproline 2-epimerase (347 aa).

Position 85 (Gln-85) interacts with substrate. The Proton acceptor role is filled by Ser-93. Substrate-binding positions include 94–95 (GS) and Asp-251. Catalysis depends on Cys-255, which acts as the Proton donor. 256–257 (GT) contacts substrate.

It belongs to the proline racemase family.

It carries out the reaction trans-4-hydroxy-L-proline = cis-4-hydroxy-D-proline. Its function is as follows. Catalyzes the epimerization of trans-4-hydroxy-L-proline (t4LHyp) to cis-4-hydroxy-D-proline (c4DHyp). May be involved in a degradation pathway of t4LHyp. Can also catalyze the epimerization of trans-3-hydroxy-L-proline (t3LHyp) to cis-3-hydroxy-D-proline (c3DHyp) in vitro. Displays no proline racemase activity. This chain is 4-hydroxyproline 2-epimerase, found in Allorhizobium ampelinum (strain ATCC BAA-846 / DSM 112012 / S4) (Agrobacterium vitis (strain S4)).